Here is a 169-residue protein sequence, read N- to C-terminus: N5-carboxyaminoimidazole ribonucleotide mutase (169 aa).

Substrate is bound by residues S16, D19, and R46.

The protein belongs to the AIR carboxylase family. Class I subfamily.

It carries out the reaction 5-carboxyamino-1-(5-phospho-D-ribosyl)imidazole + H(+) = 5-amino-1-(5-phospho-D-ribosyl)imidazole-4-carboxylate. The protein operates within purine metabolism; IMP biosynthesis via de novo pathway; 5-amino-1-(5-phospho-D-ribosyl)imidazole-4-carboxylate from 5-amino-1-(5-phospho-D-ribosyl)imidazole (N5-CAIR route): step 2/2. Its function is as follows. Catalyzes the conversion of N5-carboxyaminoimidazole ribonucleotide (N5-CAIR) to 4-carboxy-5-aminoimidazole ribonucleotide (CAIR). This chain is N5-carboxyaminoimidazole ribonucleotide mutase, found in Escherichia coli O157:H7.